Consider the following 605-residue polypeptide: MEDVEARFAHLLQPIRDLTKNWEVDVAAQLGEYLEELDQICISFDEGKTTMNFIEAALLIQGSACVYSKKVEYLYSLVYQALDFISGKRRAKQLSSVQEDRANGVASSGVPQEAENEFLSLDDFPDSRTNVDLKNDQTPSEVLIIPLLPMALVAPDEMEKNNNPLYSRQGEVLASRKDFRMNTCVPHPRGAFMLEPEGMSPMEPAGVSPMPGTQKDTGRTEEQPMEVSVCRSPVPALGFSQEPGPSPEGPMPLGGGEDEDAEEAVELPEASAPKAALEPKESRSPQQSAALPRRYMLREREGAPEPASCVKETPDPWQSLDPFDSLESKPFKKGRPYSVPPCVEEALGQKRKRKGAAKLQDFHQWYLAAYADHADSRRLRRKGPSFADMEVLYWTHVKEQLETLRKLQRREVAEQWLRPAEEDHLEDSLEDLGAADDFLEPEEYMEPEGADPREAADLDAVPMSLSYEELVRRNVELFIATSQKFVQETELSQRIRDWEDTVQPLLQEQEQHVPFDIHTYGDQLVSRFPQLNEWCPFAELVAGQPAFEVCRSMLASLQLANDYTVEITQQPGLEMAVDTMSLRLLTHQRAHKRFQTYAAPSMAQP.

At Thr19 the chain carries Phosphothreonine. Ser95, Ser200, Ser208, Ser228, and Ser232 each carry phosphoserine. Residues 194-331 (LEPEGMSPME…PFDSLESKPF (138 aa)) are disordered. Acidic residues predominate over residues 256 to 266 (GEDEDAEEAVE). Residues Ser282, Ser284, Ser466, and Ser492 each carry the phosphoserine modification.

The protein belongs to the CND2 H2 (condensin-2 subunit 2) family. In terms of assembly, component of the condensin-2 complex, which contains the SMC2 and SMC4 heterodimer, and three non SMC subunits, NCAPG2, NCAPH2 and NCAPD3 that probably regulate the complex.

It localises to the nucleus. The protein resides in the chromosome. Functionally, regulatory subunit of the condensin-2 complex, a complex that seems to provide chromosomes with an additional level of organization and rigidity and in establishing mitotic chromosome architecture. May promote the resolution of double-strand DNA catenanes (intertwines) between sister chromatids. Condensin-mediated compaction likely increases tension in catenated sister chromatids, providing directionality for type II topoisomerase-mediated strand exchanges toward chromatid decatenation. Required for decatenation of chromatin bridges at anaphase. Early in neurogenesis, may play an essential role to ensure accurate mitotic chromosome condensation in neuron stem cells, ultimately affecting neuron pool and cortex size. Seems to have lineage-specific role in T-cell development. This Homo sapiens (Human) protein is Condensin-2 complex subunit H2 (NCAPH2).